A 452-amino-acid chain; its full sequence is MNICMRNGYEQFSLTSPGTSDLEIGGSFWKDEPDTKYLCLDSPVEQRQHQPPMAVCAGCRLEISDRYFLRVNPNLEFHAQCLKCVQCSRPLDENQTAFVKNGQTYCRDDYRRLFTTRCSRCHGDFDKTDLVMRAGPQNVFHLNCFACVACEKRLQTGEEFQIKNNSLYCRSDCRGLDNPDTSASVPDYSKLNNNNNNDNNNSSSNFDEDEWDEERSTLTSLDNNTSSPLGSPKSDGVRTPLFGHHNSGSGGSTSSCGKKKKDKQATRVRTVLNENQLKILRDCYSINSRPDATLKERLVEMTGLSARVIRVWFQNKRCKDKKRQIQITENRLNSEREEVLNRVRVNGIGPLMVQPATPHIDNTLGGPIDIQHFAQWNGTPPPPPPQYGNPMMFNSPSTFDVSVILAPVAPNVTSPSEALGPLGASVFPHFSPQHAPFTATSHDISSPAPCGE.

2 consecutive LIM zinc-binding domains span residues 54–116 (AVCA…LFTT) and 117–179 (RCSR…LDNP). A disordered region spans residues 184-268 (SVPDYSKLNN…KKKDKQATRV (85 aa)). Composition is skewed to low complexity over residues 192–205 (NNNN…SSSN) and 217–227 (TLTSLDNNTSS). Positions 265–324 (ATRVRTVLNENQLKILRDCYSINSRPDATLKERLVEMTGLSARVIRVWFQNKRCKDKKRQ) form a DNA-binding region, homeobox. The tract at residues 347–376 (GIGPLMVQPATPHIDNTLGGPIDIQHFAQW) is LIM interaction domain (LID).

As to quaternary structure, interacts (via LID domain) with ceh-14 (via LIM zinc-binding domains 1 and 2). As to expression, expressed in gonadal sheath cells, URA motoneurons, and 10 additional cells near the isthmus and terminal bulb of the pharynx. Expressed in the ALA and BDU cells.

It localises to the nucleus. Its function is as follows. Probable DNA-binding transcriptional activator. This chain is LIM/homeobox protein lim-7, found in Caenorhabditis elegans.